Reading from the N-terminus, the 4481-residue chain is Dynein axonemal heavy chain 17 (4481 aa).

Residues 1–1792 (MPDLRIDYLE…FANICDAQIK (1792 aa)) form a stem region. The stretch at 521–569 (LLYMCGGLLERPLILVEVVPRYSVMLEMFNTELDNAKLMYDAQMAASAD) is one Kelch 1 repeat. Residues 759–826 (ENVMEYIQEM…GRVANLNKRY (68 aa)) are a coiled coil. 2 TPR repeats span residues 1533-1566 (VVEA…YLET) and 1688-1722 (IWWT…QLNA). AAA stretches follow at residues 1793 to 2014 (YSYE…VLVV), 2074 to 2295 (KIIK…IGFK), 2401 to 2649 (ELDP…IFQG), and 2747 to 2996 (SYNE…ERRY). ATP-binding positions include 1831 to 1838 (GPAGTGKT) and 2112 to 2119 (GNAGSGKS). A Kelch 2 repeat occupies 2229-2275 (ISHLRTATPATVSRAGILYINPADLGWNPVVSSWIERRKVQSEKANL). ATP-binding positions include 2439–2446 (GNAGTGKS) and 2785–2792 (GVGGSGKQ). Residues 2782 to 2834 (LLVGVGGSGKQSLSRLAAYISALDVFQITLKKGYAIPDLKMDLATQYIKSAVK) form a Kelch 3 repeat. Coiled coils occupy residues 3011-3071 (YQNL…IQVV) and 3241-3293 (DVAP…EKIK). The tract at residues 3011 to 3297 (YQNLLAKKRM…TAEKIKCQQE (287 aa)) is stalk. AAA regions lie at residues 3389 to 3616 (LTDD…EIEE) and 3826 to 4059 (VKNF…VLYN). Residues 4138–4173 (PESPYLYGLHPNAEIGFLTVTSEKLFRTVLEMQPKE) form a TPR 3 repeat. Kelch repeat units follow at residues 4272–4321 (NLGL…DLLQ) and 4339–4385 (VWLA…DMTA).

Belongs to the dynein heavy chain family. Consists of at least two heavy chains and a number of intermediate and light chains.

The protein resides in the cytoplasm. It is found in the cytoskeleton. Its subcellular location is the flagellum axoneme. Force generating protein component of the outer dynein arms (ODAs) in the sperm flagellum. Produces force towards the minus ends of microtubules. Dynein has ATPase activity; the force-producing power stroke is thought to occur on release of ADP. Plays a major role in sperm motility, implicated in sperm flagellar assembly and beating. This is Dynein axonemal heavy chain 17 from Mus musculus (Mouse).